The chain runs to 208 residues: Kinetochore protein Spc25 (208 aa).

Residues 31 to 101 (SKIAAKHQLI…KKQRRDELMG (71 aa)) adopt a coiled-coil conformation.

This sequence belongs to the SPC25 family. Component of the Ndc80 complex, which is composed of Ndc80, Nuf2 and Spc25.

Its subcellular location is the nucleus. The protein localises to the chromosome. It is found in the centromere. The protein resides in the kinetochore. Acts as a component of the essential kinetochore-associated Ndc80 complex, which is required for chromosome segregation and spindle checkpoint activity during meiosis and mitosis. Required for kinetochore integrity and the organization of stable microtubule binding sites in the outer plate of the kinetochore. Participates in SAC signaling that responds specifically to disruptions in spindle microtubule dynamics. The NDC80 complex synergistically enhances the affinity of the SKA1 complex for microtubules and may allow the NDC80 complex to track depolymerizing microtubules. This Drosophila mojavensis (Fruit fly) protein is Kinetochore protein Spc25.